Here is a 446-residue protein sequence, read N- to C-terminus: Tubulin beta-6 chain (446 aa).

Residues Q11, E69, S138, G142, T143, G144, N204, and N226 each contribute to the GTP site. E69 contributes to the Mg(2+) binding site. The disordered stretch occupies residues 426 to 446 (QDATADEEEYEDEEEVQADDM). Residues 429–446 (TADEEEYEDEEEVQADDM) show a composition bias toward acidic residues.

Belongs to the tubulin family. In terms of assembly, dimer of alpha and beta chains. A typical microtubule is a hollow water-filled tube with an outer diameter of 25 nm and an inner diameter of 15 nM. Alpha-beta heterodimers associate head-to-tail to form protofilaments running lengthwise along the microtubule wall with the beta-tubulin subunit facing the microtubule plus end conferring a structural polarity. Microtubules usually have 13 protofilaments but different protofilament numbers can be found in some organisms and specialized cells. Mg(2+) is required as a cofactor.

The protein resides in the cytoplasm. It localises to the cytoskeleton. Its function is as follows. Tubulin is the major constituent of microtubules, a cylinder consisting of laterally associated linear protofilaments composed of alpha- and beta-tubulin heterodimers. Microtubules grow by the addition of GTP-tubulin dimers to the microtubule end, where a stabilizing cap forms. Below the cap, tubulin dimers are in GDP-bound state, owing to GTPase activity of alpha-tubulin. The chain is Tubulin beta-6 chain (TUBB6) from Zea mays (Maize).